A 142-amino-acid chain; its full sequence is Large ribosomal subunit protein uL13 (142 aa).

This sequence belongs to the universal ribosomal protein uL13 family. As to quaternary structure, part of the 50S ribosomal subunit.

Functionally, this protein is one of the early assembly proteins of the 50S ribosomal subunit, although it is not seen to bind rRNA by itself. It is important during the early stages of 50S assembly. In Actinobacillus succinogenes (strain ATCC 55618 / DSM 22257 / CCUG 43843 / 130Z), this protein is Large ribosomal subunit protein uL13.